Reading from the N-terminus, the 459-residue chain is Argininosuccinate lyase (459 aa).

The protein belongs to the lyase 1 family. Argininosuccinate lyase subfamily.

The protein localises to the cytoplasm. It catalyses the reaction 2-(N(omega)-L-arginino)succinate = fumarate + L-arginine. Its pathway is amino-acid biosynthesis; L-arginine biosynthesis; L-arginine from L-ornithine and carbamoyl phosphate: step 3/3. The chain is Argininosuccinate lyase from Staphylococcus saprophyticus subsp. saprophyticus (strain ATCC 15305 / DSM 20229 / NCIMB 8711 / NCTC 7292 / S-41).